The sequence spans 248 residues: Probable transcriptional regulatory protein FTN_1028 (248 aa).

It belongs to the TACO1 family.

The protein localises to the cytoplasm. The polypeptide is Probable transcriptional regulatory protein FTN_1028 (Francisella tularensis subsp. novicida (strain U112)).